A 37-amino-acid chain; its full sequence is Photosystem II reaction center protein M (37 aa).

A helical transmembrane segment spans residues 7–27 (GFIAVLMFLAIPTAFLLIPYV).

The protein belongs to the PsbM family. PSII is composed of 1 copy each of membrane proteins PsbA, PsbB, PsbC, PsbD, PsbE, PsbF, PsbH, PsbI, PsbJ, PsbK, PsbL, PsbM, PsbT, PsbX, PsbY, PsbZ, Psb30/Ycf12, at least 3 peripheral proteins of the oxygen-evolving complex and a large number of cofactors. It forms dimeric complexes.

The protein resides in the plastid. The protein localises to the chloroplast thylakoid membrane. Functionally, one of the components of the core complex of photosystem II (PSII). PSII is a light-driven water:plastoquinone oxidoreductase that uses light energy to abstract electrons from H(2)O, generating O(2) and a proton gradient subsequently used for ATP formation. It consists of a core antenna complex that captures photons, and an electron transfer chain that converts photonic excitation into a charge separation. This subunit is found at the monomer-monomer interface. This is Photosystem II reaction center protein M from Pinus koraiensis (Korean pine).